Here is a 66-residue protein sequence, read N- to C-terminus: Large ribosomal subunit protein bL35 (66 aa).

Belongs to the bacterial ribosomal protein bL35 family.

The chain is Large ribosomal subunit protein bL35 from Wigglesworthia glossinidia brevipalpis.